We begin with the raw amino-acid sequence, 86 residues long: Large ribosomal subunit protein eL31 (86 aa).

The protein belongs to the eukaryotic ribosomal protein eL31 family.

This is Large ribosomal subunit protein eL31 from Methanopyrus kandleri (strain AV19 / DSM 6324 / JCM 9639 / NBRC 100938).